Reading from the N-terminus, the 122-residue chain is Basic phospholipase A2 vipoxin B chain (122 aa).

7 disulfides stabilise this stretch: cysteine 26–cysteine 115, cysteine 28–cysteine 44, cysteine 43–cysteine 95, cysteine 49–cysteine 122, cysteine 50–cysteine 88, cysteine 57–cysteine 81, and cysteine 75–cysteine 86. Residues tyrosine 27, glycine 29, and glycine 31 each coordinate Ca(2+). Residue histidine 47 is part of the active site. Aspartate 48 provides a ligand contact to Ca(2+). Aspartate 89 is an active-site residue.

The protein belongs to the phospholipase A2 family. Group II subfamily. D49 sub-subfamily. In terms of assembly, heterodimer of A (AC P04084) and B chains; non-covalently linked. The A chain (acidic) is non-toxic, and increases the toxicity of the B chain (basic). The A chain may act as factor stabilizing the complex structure and hence retaining its toxicity by preventing non-specific binding. Upon binding to the target membranes the A chain is postulated to dissociate. Requires Ca(2+) as cofactor. Expressed by the venom gland.

Its subcellular location is the secreted. The catalysed reaction is a 1,2-diacyl-sn-glycero-3-phosphocholine + H2O = a 1-acyl-sn-glycero-3-phosphocholine + a fatty acid + H(+). Its function is as follows. Heterodimer: postsynaptic neurotoxin. In terms of biological role, monomer: snake venom phospholipase A2 (PLA2) that shows hemolytic activity and inhibition of platelet aggregation. The hemolytic activity occurs only in presence of fatty acids (unsaturated fatty acids facilitate induce a strong hemolytic activity, whereas saturated fatty acids induce a slight activity). The inhibition of platelet aggregation is almost maximal when aggregation is induced by collagen, and arachidonic acid, whereas it is only of 30% when the aggregation is induced by ADP. PLA2 catalyzes the calcium-dependent hydrolysis of the 2-acyl groups in 3-sn-phosphoglycerides. This is Basic phospholipase A2 vipoxin B chain from Vipera ammodytes meridionalis (Eastern sand viper).